A 344-amino-acid chain; its full sequence is Holliday junction branch migration complex subunit RuvB (344 aa).

Positions 1–185 (MTERSDRDVS…FGFTAHMDFY (185 aa)) are large ATPase domain (RuvB-L). Residues Leu24, Arg25, Gly66, Lys69, Thr70, Ser71, 132-134 (EDF), Arg175, Tyr185, and Arg222 contribute to the ATP site. Thr70 serves as a coordination point for Mg(2+). Residues 186–256 (EPAELERVLA…VAKAALEVYD (71 aa)) form a small ATPAse domain (RuvB-S) region. The segment at 259–344 (ELGLDRLDRA…VGASQPGLFE (86 aa)) is head domain (RuvB-H). DNA-binding residues include Arg314 and Arg319.

This sequence belongs to the RuvB family. As to quaternary structure, homohexamer. Forms an RuvA(8)-RuvB(12)-Holliday junction (HJ) complex. HJ DNA is sandwiched between 2 RuvA tetramers; dsDNA enters through RuvA and exits via RuvB. An RuvB hexamer assembles on each DNA strand where it exits the tetramer. Each RuvB hexamer is contacted by two RuvA subunits (via domain III) on 2 adjacent RuvB subunits; this complex drives branch migration. In the full resolvosome a probable DNA-RuvA(4)-RuvB(12)-RuvC(2) complex forms which resolves the HJ.

It is found in the cytoplasm. It carries out the reaction ATP + H2O = ADP + phosphate + H(+). Functionally, the RuvA-RuvB-RuvC complex processes Holliday junction (HJ) DNA during genetic recombination and DNA repair, while the RuvA-RuvB complex plays an important role in the rescue of blocked DNA replication forks via replication fork reversal (RFR). RuvA specifically binds to HJ cruciform DNA, conferring on it an open structure. The RuvB hexamer acts as an ATP-dependent pump, pulling dsDNA into and through the RuvAB complex. RuvB forms 2 homohexamers on either side of HJ DNA bound by 1 or 2 RuvA tetramers; 4 subunits per hexamer contact DNA at a time. Coordinated motions by a converter formed by DNA-disengaged RuvB subunits stimulates ATP hydrolysis and nucleotide exchange. Immobilization of the converter enables RuvB to convert the ATP-contained energy into a lever motion, pulling 2 nucleotides of DNA out of the RuvA tetramer per ATP hydrolyzed, thus driving DNA branch migration. The RuvB motors rotate together with the DNA substrate, which together with the progressing nucleotide cycle form the mechanistic basis for DNA recombination by continuous HJ branch migration. Branch migration allows RuvC to scan DNA until it finds its consensus sequence, where it cleaves and resolves cruciform DNA. The protein is Holliday junction branch migration complex subunit RuvB of Mycobacterium tuberculosis (strain ATCC 25177 / H37Ra).